A 145-amino-acid chain; its full sequence is D-aminoacyl-tRNA deacylase (145 aa).

A Gly-cisPro motif, important for rejection of L-amino acids motif is present at residues 137 to 138 (GP).

The protein belongs to the DTD family. As to quaternary structure, homodimer.

Its subcellular location is the cytoplasm. The enzyme catalyses glycyl-tRNA(Ala) + H2O = tRNA(Ala) + glycine + H(+). It carries out the reaction a D-aminoacyl-tRNA + H2O = a tRNA + a D-alpha-amino acid + H(+). An aminoacyl-tRNA editing enzyme that deacylates mischarged D-aminoacyl-tRNAs. Also deacylates mischarged glycyl-tRNA(Ala), protecting cells against glycine mischarging by AlaRS. Acts via tRNA-based rather than protein-based catalysis; rejects L-amino acids rather than detecting D-amino acids in the active site. By recycling D-aminoacyl-tRNA to D-amino acids and free tRNA molecules, this enzyme counteracts the toxicity associated with the formation of D-aminoacyl-tRNA entities in vivo and helps enforce protein L-homochirality. This Salmonella choleraesuis (strain SC-B67) protein is D-aminoacyl-tRNA deacylase.